The primary structure comprises 493 residues: Galactose-1-phosphate uridylyltransferase (493 aa).

This sequence belongs to the galactose-1-phosphate uridylyltransferase type 2 family.

It is found in the cytoplasm. The enzyme catalyses alpha-D-galactose 1-phosphate + UDP-alpha-D-glucose = alpha-D-glucose 1-phosphate + UDP-alpha-D-galactose. It participates in carbohydrate metabolism; galactose metabolism. The polypeptide is Galactose-1-phosphate uridylyltransferase (galT) (Streptococcus thermophilus).